Reading from the N-terminus, the 282-residue chain is Peptidoglycan-recognition protein LD (282 aa).

The tract at residues 1–29 (MDSSHIAVRVARRSPSPAAVSQSSYGSLG) is disordered. Residues 1-88 (MDSSHIAVRV…RRNPTLHEDC (88 aa)) lie on the Cytoplasmic side of the membrane. A helical transmembrane segment spans residues 89–111 (FNWRSVGLLVMCASALALAAYLL). Residues 112–282 (WRQTQTPDFG…PHYASHQTSK (171 aa)) lie on the Extracellular side of the membrane. A disulfide bond links Cys-162 and Cys-166. Residue Asn-222 is glycosylated (N-linked (GlcNAc...) asparagine).

The protein belongs to the N-acetylmuramoyl-L-alanine amidase 2 family. Expressed in uninduced hemocytes and mbn-2 cells.

It is found in the cell membrane. Its function is as follows. Peptidoglycan-recognition protein probably involved in innate immunity by binding to peptidoglycans (PGN) of bacteria and activating the immune response. This chain is Peptidoglycan-recognition protein LD (PGRP-LD), found in Drosophila melanogaster (Fruit fly).